A 93-amino-acid polypeptide reads, in one-letter code: Small ribosomal subunit protein uS19 (93 aa).

This sequence belongs to the universal ribosomal protein uS19 family.

Functionally, protein S19 forms a complex with S13 that binds strongly to the 16S ribosomal RNA. The chain is Small ribosomal subunit protein uS19 from Arthrobacter sp. (strain FB24).